Consider the following 182-residue polypeptide: Phospholipase A2 inhibitor gamma subunit A (182 aa).

8 cysteine pairs are disulfide-bonded: Cys-3-Cys-27, Cys-6-Cys-13, Cys-20-Cys-48, Cys-54-Cys-75, Cys-76-Cys-81, Cys-99-Cys-124, Cys-117-Cys-146, and Cys-150-Cys-172. Asn-157 carries an N-linked (GlcNAc...) asparagine glycan.

The protein belongs to the CNF-like-inhibitor family. As to quaternary structure, heterotrimer of 2 subunits A and 1 subunit B. Post-translationally, N-glycosylation is not important for activity, since deglycosylation does not change its PLA2 inhibitory activity. In terms of tissue distribution, expressed by the liver.

It localises to the secreted. Its function is as follows. Strongly inhibits its own venom PLA2 and all other PLA2s tested including Elapid, Crotalid and Viperid venom PLA2s, as well as honeybee PLA2s. The sequence is that of Phospholipase A2 inhibitor gamma subunit A from Laticauda semifasciata (Black-banded sea krait).